Here is a 266-residue protein sequence, read N- to C-terminus: Undecaprenyl-diphosphatase (266 aa).

8 helical membrane-spanning segments follow: residues 4-24 (LATI…PVSS), 41-61 (GSAA…LVAY), 79-99 (AVAF…VGAV), 108-128 (LESP…ILAI), 143-163 (MPLR…IPGV), 184-204 (AEFS…YSLW), 220-240 (IGLF…VAIV), and 243-263 (FGFA…LLWL).

It belongs to the UppP family.

It is found in the cell inner membrane. It carries out the reaction di-trans,octa-cis-undecaprenyl diphosphate + H2O = di-trans,octa-cis-undecaprenyl phosphate + phosphate + H(+). Catalyzes the dephosphorylation of undecaprenyl diphosphate (UPP). Confers resistance to bacitracin. The chain is Undecaprenyl-diphosphatase from Sphingopyxis alaskensis (strain DSM 13593 / LMG 18877 / RB2256) (Sphingomonas alaskensis).